A 138-amino-acid polypeptide reads, in one-letter code: HTH-type transcriptional regulator CueR (138 aa).

Residues 1-69 (MNISDVAKKT…LEECGELVNL (69 aa)) enclose the HTH merR-type domain. The H-T-H motif DNA-binding region spans 4–23 (SDVAKKTGLTSKAIRFYEEK). Cu(+)-binding residues include C112 and C120.

In terms of assembly, homodimer.

The protein localises to the cytoplasm. Regulates the transcription of the copA and cueO genes. It detects cytoplasmic copper stress and activates transcription in response to increasing copper concentrations. The polypeptide is HTH-type transcriptional regulator CueR (cueR) (Salmonella typhi).